We begin with the raw amino-acid sequence, 346 residues long: T-box protein 12 (346 aa).

Over residues 33–48 (DEEDVEVDVEDVDDVD) the composition is skewed to acidic residues. A disordered region spans residues 33-66 (DEEDVEVDVEDVDDVDLSSIPSKSPERSRGRPKI). Positions 86-268 (LWAKFFDLGT…KNPFAKGFRD (183 aa)) form a DNA-binding region, T-box.

It localises to the nucleus. In terms of biological role, transcription factor. Involved in cell fate determination; required to pattern the posterior hindgut. Involved in motor neuron fate determination and maintenance, acting as a transcriptional repressor to counteract gene activation by transcription factor unc-3 in a subset of motor neurons. Required throughout development to repress transcription by unc-3, probably acting by binding to specific promoter elements. Represses expression of VA and VB motor neuron-specific effector genes, such as DEG/ENaC channel del-1 and the innexin inx-12, in DA and DB motor neurons. Represses expression of transcription factor bnc-1, perhaps acting directly, in DA and DB motor neurons. The protein is T-box protein 12 (mab-9) of Caenorhabditis elegans.